The sequence spans 137 residues: Small ribosomal subunit protein uS9 (137 aa).

Positions L105–R137 are disordered. The segment covering G109–K122 has biased composition (basic and acidic residues). A compositionally biased stretch (basic residues) spans Y123–R137.

The protein belongs to the universal ribosomal protein uS9 family.

The polypeptide is Small ribosomal subunit protein uS9 (Synechococcus sp. (strain JA-3-3Ab) (Cyanobacteria bacterium Yellowstone A-Prime)).